The primary structure comprises 334 residues: N-acetyl-gamma-glutamyl-phosphate reductase (334 aa).

Residue Cys-154 is part of the active site.

It belongs to the NAGSA dehydrogenase family. Type 1 subfamily.

The protein resides in the cytoplasm. The enzyme catalyses N-acetyl-L-glutamate 5-semialdehyde + phosphate + NADP(+) = N-acetyl-L-glutamyl 5-phosphate + NADPH + H(+). It participates in amino-acid biosynthesis; L-arginine biosynthesis; N(2)-acetyl-L-ornithine from L-glutamate: step 3/4. Its function is as follows. Catalyzes the NADPH-dependent reduction of N-acetyl-5-glutamyl phosphate to yield N-acetyl-L-glutamate 5-semialdehyde. The chain is N-acetyl-gamma-glutamyl-phosphate reductase from Escherichia coli O157:H7.